The chain runs to 64 residues: U-poneritoxin(01)-Om1a (64 aa).

The N-terminal stretch at 1-27 (MKPSGLTFAFLVVFMMAIMYNSVQVTA) is a signal peptide. A propeptide spanning residues 28–45 (DADADAEAEALANALAEA) is cleaved from the precursor. Position 62 is a methionine amide (M62).

In terms of processing, truncated sequences of this peptide have also been found in the venom. It is possible they have been cleaved in the venom. As to expression, expressed by the venom gland.

The protein localises to the secreted. In terms of biological role, antimicrobial peptide with activities against E.coli (MIC=1.3 uM), S.aureus (MIC=3.1 uM), and S.cerevisiae (MIC=50 uM). Also shows histamine-releasing activity (32.9% at 10 uM). Does not show hemolytic activity, even at 50 uM. It is a short peptide for which no alpha-helical region has been predicted. This Odontomachus monticola (Trap-jaw ant) protein is U-poneritoxin(01)-Om1a.